We begin with the raw amino-acid sequence, 368 residues long: UDP-N-acetylenolpyruvoylglucosamine reductase (368 aa).

The FAD-binding PCMH-type domain occupies 32–199 (IGGKPRSAVR…LAIELQLLTD (168 aa)). The active site involves R177. Residue S257 is the Proton donor of the active site. The active site involves E358.

This sequence belongs to the MurB family. Requires FAD as cofactor.

The protein localises to the cytoplasm. It catalyses the reaction UDP-N-acetyl-alpha-D-muramate + NADP(+) = UDP-N-acetyl-3-O-(1-carboxyvinyl)-alpha-D-glucosamine + NADPH + H(+). Its pathway is cell wall biogenesis; peptidoglycan biosynthesis. Cell wall formation. The polypeptide is UDP-N-acetylenolpyruvoylglucosamine reductase (Corynebacterium glutamicum (strain R)).